Consider the following 469-residue polypeptide: Ribosomal protein uS12 methylthiotransferase RimO (469 aa).

The MTTase N-terminal domain maps to 17-132 (PRVGFVSLGC…VMDAVHLNLP (116 aa)). The [4Fe-4S] cluster site is built by C26, C62, C91, C167, C171, and C174. Residues 153-395 (LTPKHYAYLK…AVAEEVSSLK (243 aa)) enclose the Radical SAM core domain. The 73-residue stretch at 397 to 469 (QQRVGATMQV…QGHDLVAIPV (73 aa)) folds into the TRAM domain.

This sequence belongs to the methylthiotransferase family. RimO subfamily. It depends on [4Fe-4S] cluster as a cofactor.

Its subcellular location is the cytoplasm. It carries out the reaction L-aspartate(89)-[ribosomal protein uS12]-hydrogen + (sulfur carrier)-SH + AH2 + 2 S-adenosyl-L-methionine = 3-methylsulfanyl-L-aspartate(89)-[ribosomal protein uS12]-hydrogen + (sulfur carrier)-H + 5'-deoxyadenosine + L-methionine + A + S-adenosyl-L-homocysteine + 2 H(+). Catalyzes the methylthiolation of an aspartic acid residue of ribosomal protein uS12. This Polaromonas sp. (strain JS666 / ATCC BAA-500) protein is Ribosomal protein uS12 methylthiotransferase RimO.